The following is a 250-amino-acid chain: Silencing boundary-establishment protein FUB1 (250 aa).

The segment at 179–250 (PDWSGGLPNP…GFGGSGSGFI (72 aa)) is disordered. A compositionally biased stretch (basic and acidic residues) spans 202–213 (PNRRPAPRREDM). Residues 229–250 (PGSGGFGGSGSGGFGGSGSGFI) show a composition bias toward gly residues.

Belongs to the proteasome inhibitor PI31 family. Interacts with the 20S proteasome.

Plays a role in the establishment of transcriptional silencing boundaries, preventing the propagation of heterochromatic silencing. This is Silencing boundary-establishment protein FUB1 from Saccharomyces cerevisiae (strain ATCC 204508 / S288c) (Baker's yeast).